The primary structure comprises 466 residues: Phosphoenolpyruvate carboxykinase (ATP) (466 aa).

Positions 61, 196, and 202 each coordinate substrate. ATP contacts are provided by residues Lys-202, His-221, and 237–245 (GLSGTGKTT). 2 residues coordinate Mn(2+): Lys-202 and His-221. Asp-258 is a binding site for Mn(2+). The ATP site is built by Glu-286, Arg-323, and Thr-448. Arg-323 serves as a coordination point for substrate.

It belongs to the phosphoenolpyruvate carboxykinase (ATP) family. Requires Mn(2+) as cofactor.

It localises to the cytoplasm. It carries out the reaction oxaloacetate + ATP = phosphoenolpyruvate + ADP + CO2. The protein operates within carbohydrate biosynthesis; gluconeogenesis. Its function is as follows. Involved in the gluconeogenesis. Catalyzes the conversion of oxaloacetate (OAA) to phosphoenolpyruvate (PEP) through direct phosphoryl transfer between the nucleoside triphosphate and OAA. In Deinococcus radiodurans (strain ATCC 13939 / DSM 20539 / JCM 16871 / CCUG 27074 / LMG 4051 / NBRC 15346 / NCIMB 9279 / VKM B-1422 / R1), this protein is Phosphoenolpyruvate carboxykinase (ATP).